The primary structure comprises 60 residues: UPF0434 protein NMA0874 (60 aa).

Belongs to the UPF0434 family.

This is UPF0434 protein NMA0874 from Neisseria meningitidis serogroup A / serotype 4A (strain DSM 15465 / Z2491).